The sequence spans 245 residues: uncharacterized protein (245 aa).

This is an uncharacterized protein from Bacillus subtilis (strain 168).